The following is a 650-amino-acid chain: Putative secretin GspD (650 aa).

Positions Met-1–Ala-23 are cleaved as a signal peptide. Residues Glu-24 to Gly-122 form an N0 region. An N1 region spans residues Glu-124–Gly-188. Residues Thr-189–Ser-263 form an N2 region. The tract at residues Gly-266–Asp-342 is N3. Residues Arg-345–Asp-596 are secretin. A s domain region spans residues Asp-598–Arg-650.

Belongs to the bacterial secretin family. GSP D subfamily. As to quaternary structure, forms a cylindrical channel with 15 subunits; approximately 25% of the particles have 16-subunit channels. Closed pentadeacameric channels are 180 Angstroms long and 145 Angstroms in diameter. Each subunit turns in a clock-wise manner around the channel.

It is found in the cell outer membrane. Functionally, involved in a type II secretion system (T2SS, formerly general secretion pathway, GSP) for the export of folded proteins across the outer membrane. This subunit would form the outer membrane channel. This Escherichia coli (strain K12) protein is Putative secretin GspD (gspD).